Here is an 819-residue protein sequence, read N- to C-terminus: Transferrin 2 (819 aa).

The N-terminal stretch at Met1–Ala21 is a signal peptide. The Transferrin-like 1 domain maps to Met33–Leu373. 2 disulfide bridges follow: Cys36/Cys78 and Cys46/Cys69. N-linked (GlcNAc...) asparagine glycans are attached at residues Asn48 and Asn66. 2 residues coordinate Fe(3+): Asp93 and Tyr121. 3 cysteine pairs are disulfide-bonded: Cys147/Cys237, Cys190/Cys213, and Cys273/Cys287. Hydrogencarbonate-binding residues include Ala155 and Gly156. Asn187 is a glycosylation site (N-linked (GlcNAc...) asparagine). Tyr231 serves as a coordination point for Fe(3+). The tract at residues Gly325–Thr361 is disordered. The segment covering Arg332–Thr361 has biased composition (polar residues). Asn388 carries an N-linked (GlcNAc...) asparagine glycan. Positions Met450–Cys796 constitute a Transferrin-like 2 domain. Cystine bridges form between Cys453–Cys490 and Cys463–Cys481. Positions 505 and 533 each coordinate Fe(3+). 4 disulfides stabilise this stretch: Cys557/Cys646, Cys599/Cys621, Cys618/Cys629, and Cys687/Cys701. Hydrogencarbonate-binding residues include Thr559, Ala565, and Gly566. N-linked (GlcNAc...) asparagine glycosylation is present at Asn720. A lipid anchor (GPI-anchor amidated cysteine) is attached at Cys796. Positions Tyr797–Leu819 are cleaved as a propeptide — removed in mature form.

Belongs to the transferrin family. In terms of assembly, forms a complex composed of septa junction proteins Nrx-IV/Nrx, Tsf2/MTf, Cont and Nrg during late embryogenesis.

The protein resides in the apicolateral cell membrane. Its subcellular location is the cell junction. It is found in the septate junction. Iron-binding protein and component of septate junctions that form the paracellular permeability barrier in epithelial tissues. In an iron-dependent manner, required for septate junction assembly during epithelial maturation in embryos and mature septa junctions stability. The sequence is that of Transferrin 2 from Drosophila melanogaster (Fruit fly).